The chain runs to 287 residues: 3-beta-hydroxysteroid sulfotransferase (287 aa).

44 to 49 (KSGTNW) is a binding site for 3'-phosphoadenylyl sulfate. Residues Trp72 and Trp77 each coordinate substrate. Catalysis depends on His99, which acts as the Proton acceptor. 3'-phosphoadenylyl sulfate is bound by residues Arg121, Ser129, Tyr184, 218–223 (SSFKFM), and 247–249 (RKG).

This sequence belongs to the sulfotransferase 1 family. In terms of assembly, homodimer. In terms of tissue distribution, liver, intestine and kidney.

It localises to the cytoplasm. It catalyses the reaction an alcohol + 3'-phosphoadenylyl sulfate = an alkyl sulfate + adenosine 3',5'-bisphosphate + H(+). Sulfotransferase that utilizes 3'-phospho-5'-adenylyl sulfate (PAPS) as sulfonate donor to catalyze the sulfonation of 3-beta-hydroxyl groups of neutral steroids. High preference for C21 steroid (pregnenolone). The chain is 3-beta-hydroxysteroid sulfotransferase (STD2) from Cavia porcellus (Guinea pig).